The sequence spans 522 residues: E3 ubiquitin-protein ligase DMA2 (522 aa).

2 disordered regions span residues 1 to 56 (MYTP…RPAS) and 69 to 92 (QNSQTASSSAAPDQRLFGTTPSNS). Residues 14 to 35 (APTSSMTSNSSSASNANTTSSS) are compositionally biased toward low complexity. Positions 36-49 (GINPRNRASGTPSN) are enriched in polar residues. Residue Ser206 is modified to Phosphoserine. Residues Lys211, Lys256, Lys258, Lys288, Lys310, Lys333, Lys343, Lys346, Lys366, Lys406, Lys412, and Lys423 each participate in a glycyl lysine isopeptide (Lys-Gly) (interchain with G-Cter in ubiquitin) cross-link. The region spanning 295–358 (LVIGRYTERV…SGTFLNHQRL (64 aa)) is the FHA domain. The RING-type; atypical zinc-finger motif lies at 433–477 (CSICLCKIKPCQAIFISPCAHSWHFRCVRRLVMLSYPQFVCPNCR).

Belongs to the DMA1 family. In terms of processing, UBC4-dependent autoubiquitination occurs at Lys-211, Lys-258, Lys-288, Lys-310, Lys-333, Lys-343, Lys-346, Lys-366, Lys-406, Lys-412 and Lys-423. UBC13/MMS2-dependent autoubiquitination occurs at Lys-258, Lys-310, Lys-346 and Lys-366. Lys-211, Lys-256, Lys-288, Lys-310, Lys-343, Lys-258, Lys-366 and Lys-412 are also ubiquitinated in trans by DMA1 E3 ligase in association with UBC4.

The protein localises to the cytoplasm. The catalysed reaction is S-ubiquitinyl-[E2 ubiquitin-conjugating enzyme]-L-cysteine + [acceptor protein]-L-lysine = [E2 ubiquitin-conjugating enzyme]-L-cysteine + N(6)-ubiquitinyl-[acceptor protein]-L-lysine.. Its function is as follows. E3 ubiquitin-protein ligase which functions in cell cycle retarding in conjunction with the UBC4 and UBC13/MMS2 complex, 2 E2 ubiquitin conjugating enzymes. Involved in nutritional control of the cell cycle. Required for proper spindle positioning, likely regulating septin ring deposition at the bud neck. This is E3 ubiquitin-protein ligase DMA2 (DMA2) from Saccharomyces cerevisiae (strain YJM789) (Baker's yeast).